The primary structure comprises 381 residues: Chymosin (381 aa).

The first 16 residues, 1 to 16 (MRCLVVLLAVFALSQG), serve as a signal peptide directing secretion. Positions 17 to 58 (AEITRIPLYKGKSLRKALKEHGLLEDFLQKQQYGISSKYSGF) are cleaved as a propeptide — activation peptide. The 305-residue stretch at 74–378 (YFGKIYLGTP…DRANNLVGLA (305 aa)) folds into the Peptidase A1 domain. Residue D92 is part of the active site. 2 cysteine pairs are disulfide-bonded: C105/C110 and C265/C269. The active site involves D274. A disulfide bridge links C308 with C341.

Belongs to the peptidase A1 family. In terms of assembly, monomer.

The catalysed reaction is Broad specificity similar to that of pepsin A. Clots milk by cleavage of a single 104-Ser-Phe-|-Met-Ala-107 bond in kappa-chain of casein.. Chymosin is synthesized in the mucosa of the abomasum (fourth stomach) of young (unweaned) ruminants. The enzyme hydrolyzes casein to paracasein. The sequence is that of Chymosin (CYM) from Bos taurus (Bovine).